Consider the following 248-residue polypeptide: DCN1-like protein 4 (248 aa).

The segment at 1 to 35 (MPRGKRRAADTISDNMDHGQPKRARTSYTSIPTQQ) is disordered. The segment covering 26–35 (TSYTSIPTQQ) has biased composition (polar residues). The DCUN1 domain maps to 47-235 (FSQKRCMAWF…MLDEFVEWLR (189 aa)).

It localises to the nucleus. Its function is as follows. Inhibits neddylation of cullin components of SCF-type E3 ubiquitin ligase complexes and thus regulates SCF-type complex activity. Essential for development. Function inhibits cell proliferation and cell growth. This is DCN1-like protein 4 from Drosophila melanogaster (Fruit fly).